We begin with the raw amino-acid sequence, 58 residues long: Small ribosomal subunit protein bS21 (58 aa).

It belongs to the bacterial ribosomal protein bS21 family.

This chain is Small ribosomal subunit protein bS21, found in Lacticaseibacillus paracasei (strain ATCC 334 / BCRC 17002 / CCUG 31169 / CIP 107868 / KCTC 3260 / NRRL B-441) (Lactobacillus paracasei).